Reading from the N-terminus, the 421-residue chain is Gamma-glutamyl phosphate reductase (421 aa).

The protein belongs to the gamma-glutamyl phosphate reductase family.

The protein resides in the cytoplasm. It catalyses the reaction L-glutamate 5-semialdehyde + phosphate + NADP(+) = L-glutamyl 5-phosphate + NADPH + H(+). Its pathway is amino-acid biosynthesis; L-proline biosynthesis; L-glutamate 5-semialdehyde from L-glutamate: step 2/2. Catalyzes the NADPH-dependent reduction of L-glutamate 5-phosphate into L-glutamate 5-semialdehyde and phosphate. The product spontaneously undergoes cyclization to form 1-pyrroline-5-carboxylate. The polypeptide is Gamma-glutamyl phosphate reductase (Azotobacter vinelandii (strain DJ / ATCC BAA-1303)).